We begin with the raw amino-acid sequence, 266 residues long: MIYSRSKLPSEGEILIATVKQVFDYGSYVSLDEYGGLQAFLPWSEVSSKWVKNIRDVLKENRKVIVKVIRVDRRKGTVDVSLKKVTDDERRKKNLQWKKIQRLDKILELVSQKLKLSEKDAWEQVAWKLEAKYGDPITAIEKAVKEGEKILIDAGVPEIWVKPLLEEASKHAEERKVKMSGLITVRTNEPLGVEKIKEVISKALENIEQDYESLLNIKIYTIGAPRYRVDVVGTNPKEASEALNQIISNLIKIGKEENVDISVVKK.

Positions 12–83 (GEILIATVKQ…RKGTVDVSLK (72 aa)) constitute an S1 motif domain.

This sequence belongs to the eIF-2-alpha family. In terms of assembly, heterotrimer composed of an alpha, a beta and a gamma chain.

Functionally, eIF-2 functions in the early steps of protein synthesis by forming a ternary complex with GTP and initiator tRNA. In Saccharolobus solfataricus (strain ATCC 35092 / DSM 1617 / JCM 11322 / P2) (Sulfolobus solfataricus), this protein is Translation initiation factor 2 subunit alpha.